A 267-amino-acid polypeptide reads, in one-letter code: Glutamate 5-kinase (267 aa).

Lys18 is an ATP binding site. Substrate is bound by residues Ser58, Asp145, and Asn157. ATP-binding positions include 177-178 (SD) and 219-225 (TGGMATK).

This sequence belongs to the glutamate 5-kinase family.

It is found in the cytoplasm. The catalysed reaction is L-glutamate + ATP = L-glutamyl 5-phosphate + ADP. It functions in the pathway amino-acid biosynthesis; L-proline biosynthesis; L-glutamate 5-semialdehyde from L-glutamate: step 1/2. In terms of biological role, catalyzes the transfer of a phosphate group to glutamate to form L-glutamate 5-phosphate. This chain is Glutamate 5-kinase, found in Clostridium tetani (strain Massachusetts / E88).